The following is a 369-amino-acid chain: Putative gustatory receptor 39b (369 aa).

Residues 1 to 32 (MLYSFHPYLKYFALLGLVPWSESCAQSKFVQK) are Cytoplasmic-facing. The helical transmembrane segment at 33 to 53 (VYSAILIILNAVHFGISIYFP) threads the bilayer. Over 54–59 (QSAELF) the chain is Extracellular. The helical transmembrane segment at 60–80 (LSLMVNVIVFVARIVCVTVII) threads the bilayer. Topologically, residues 81–122 (LQVMVHYDDYFRFCREMKYLGLRLQCELKIHVGRLKWQSYAK) are cytoplasmic. A helical membrane pass occupies residues 123–143 (ILALGIGFLVTVLPSIYVALS). Topologically, residues 144 to 147 (GSLL) are extracellular. The chain crosses the membrane as a helical span at residues 148-168 (YFWSSLLSILIIRMQFVLVLL). The Cytoplasmic segment spans residues 169 to 224 (NVELLGHHVSLLGIRLQNVLECHLMGANCTLDGNANRLCSLEFLLALKQSHMQLHY). The chain crosses the membrane as a helical span at residues 225-245 (LFTHFNDLFGWSILGTYVVLF). Topologically, residues 246-265 (SDSTVNIYWTQQVLVEVYEY) are extracellular. Residues 266–286 (KYLYATFSVFVPSFFNILVFC) form a helical membrane-spanning segment. Residues 287–348 (RCGEFCQRQS…EGFMSTDNSL (62 aa)) lie on the Cytoplasmic side of the membrane. Residues 349-368 (LMSILAAKVTYLIVLMQFSS) form a helical membrane-spanning segment. Val-369 is a topological domain (extracellular).

The protein belongs to the insect chemoreceptor superfamily. Gustatory receptor (GR) family. Gr2a subfamily. As to expression, expressed in the adult labellar chemosensory neurons and in abdominal ganglions. In larvae, is expressed in neurons of the dorsal and posterior pharyngeal sense organs.

It is found in the cell membrane. In terms of biological role, probable gustatory receptor which mediates acceptance or avoidance behavior, depending on its substrates. Has also atypical sensory function in organ not limited to conventional taste sensing like abdominal ganglions. This is Putative gustatory receptor 39b (Gr39b) from Drosophila melanogaster (Fruit fly).